The primary structure comprises 349 residues: GTPase Obg (349 aa).

In terms of domain architecture, Obg spans 1–159 (MKFLDEAKVY…RWIWLRLKLI (159 aa)). The OBG-type G domain maps to 160 to 327 (ADAGLVGLPN…ALRALVEVIG (168 aa)). GTP contacts are provided by residues 166 to 173 (GLPNAGKS), 191 to 195 (FTTLH), 212 to 215 (DIPG), 279 to 282 (NKID), and 308 to 310 (SGV). Mg(2+) is bound by residues S173 and T193.

Belongs to the TRAFAC class OBG-HflX-like GTPase superfamily. OBG GTPase family. As to quaternary structure, monomer. The cofactor is Mg(2+).

It is found in the cytoplasm. In terms of biological role, an essential GTPase which binds GTP, GDP and possibly (p)ppGpp with moderate affinity, with high nucleotide exchange rates and a fairly low GTP hydrolysis rate. Plays a role in control of the cell cycle, stress response, ribosome biogenesis and in those bacteria that undergo differentiation, in morphogenesis control. The chain is GTPase Obg from Rhodopseudomonas palustris (strain BisB18).